The following is a 268-amino-acid chain: Ribosomal RNA small subunit methyltransferase A (268 aa).

Asparagine 21, leucine 23, glycine 48, glutamate 69, aspartate 94, and asparagine 115 together coordinate S-adenosyl-L-methionine.

This sequence belongs to the class I-like SAM-binding methyltransferase superfamily. rRNA adenine N(6)-methyltransferase family. RsmA subfamily.

It is found in the cytoplasm. It catalyses the reaction adenosine(1518)/adenosine(1519) in 16S rRNA + 4 S-adenosyl-L-methionine = N(6)-dimethyladenosine(1518)/N(6)-dimethyladenosine(1519) in 16S rRNA + 4 S-adenosyl-L-homocysteine + 4 H(+). Functionally, specifically dimethylates two adjacent adenosines (A1518 and A1519) in the loop of a conserved hairpin near the 3'-end of 16S rRNA in the 30S particle. May play a critical role in biogenesis of 30S subunits. The polypeptide is Ribosomal RNA small subunit methyltransferase A (Saccharophagus degradans (strain 2-40 / ATCC 43961 / DSM 17024)).